Reading from the N-terminus, the 234-residue chain is Sugar fermentation stimulation protein homolog (234 aa).

It belongs to the SfsA family.

The polypeptide is Sugar fermentation stimulation protein homolog (Pseudoalteromonas atlantica (strain T6c / ATCC BAA-1087)).